We begin with the raw amino-acid sequence, 439 residues long: Methylenetetrahydrofolate--tRNA-(uracil-5-)-methyltransferase TrmFO (439 aa).

8-13 (GGGLAG) lines the FAD pocket.

This sequence belongs to the MnmG family. TrmFO subfamily. FAD serves as cofactor.

It is found in the cytoplasm. It catalyses the reaction uridine(54) in tRNA + (6R)-5,10-methylene-5,6,7,8-tetrahydrofolate + NADH + H(+) = 5-methyluridine(54) in tRNA + (6S)-5,6,7,8-tetrahydrofolate + NAD(+). It carries out the reaction uridine(54) in tRNA + (6R)-5,10-methylene-5,6,7,8-tetrahydrofolate + NADPH + H(+) = 5-methyluridine(54) in tRNA + (6S)-5,6,7,8-tetrahydrofolate + NADP(+). Catalyzes the folate-dependent formation of 5-methyl-uridine at position 54 (M-5-U54) in all tRNAs. The polypeptide is Methylenetetrahydrofolate--tRNA-(uracil-5-)-methyltransferase TrmFO (Dictyoglomus turgidum (strain DSM 6724 / Z-1310)).